A 413-amino-acid chain; its full sequence is ORC1-type DNA replication protein 2 (413 aa).

Residues 70–74 (TGKTA), tyrosine 217, and arginine 229 contribute to the ATP site.

Belongs to the CDC6/cdc18 family. Monomer. Interacts with Cdc6-3, MCM and PolB1. In terms of processing, autophosphorylated in vitro.

In terms of biological role, involved in regulation of DNA replication. May play essential roles in origin recognition and cell cycle control of replication. Binds both single-stranded and double-stranded DNA, with a preference for molecules that contain a bubble, a fork, or a tail. Has a weak ATPase activity. Stimulates the binding of the MCM helicase to the origin DNA, but strongly inhibits ATPase and DNA helicase activities of MCM. Also regulates the DNA polymerase and the nuclease activities of PolB1. The protein is ORC1-type DNA replication protein 2 (cdc6-2) of Saccharolobus solfataricus (strain ATCC 35092 / DSM 1617 / JCM 11322 / P2) (Sulfolobus solfataricus).